A 179-amino-acid polypeptide reads, in one-letter code: Large ribosomal subunit protein uL5 (179 aa).

This sequence belongs to the universal ribosomal protein uL5 family. As to quaternary structure, part of the 50S ribosomal subunit; part of the 5S rRNA/L5/L18/L25 subcomplex. Contacts the 5S rRNA and the P site tRNA. Forms a bridge to the 30S subunit in the 70S ribosome.

This is one of the proteins that bind and probably mediate the attachment of the 5S RNA into the large ribosomal subunit, where it forms part of the central protuberance. In the 70S ribosome it contacts protein S13 of the 30S subunit (bridge B1b), connecting the 2 subunits; this bridge is implicated in subunit movement. Contacts the P site tRNA; the 5S rRNA and some of its associated proteins might help stabilize positioning of ribosome-bound tRNAs. The polypeptide is Large ribosomal subunit protein uL5 (Natranaerobius thermophilus (strain ATCC BAA-1301 / DSM 18059 / JW/NM-WN-LF)).